The chain runs to 63 residues: uncharacterized protein (63 aa).

A compositionally biased stretch (basic residues) spans 1-15 (MGRNHIHKNRDKNKQ). Residues 1 to 63 (MGRNHIHKNR…ADNRAKKKSR (63 aa)) are disordered. Residues 30–44 (GVYEEYSTELADADD) show a composition bias toward acidic residues. A compositionally biased stretch (basic and acidic residues) spans 45-57 (REAQERAKAADNR).

This is an uncharacterized protein from Bacillus subtilis (strain 168).